Consider the following 258-residue polypeptide: Type III pantothenate kinase (258 aa).

ATP is bound at residue aspartate 6–valine 13. Substrate-binding positions include tyrosine 100 and glycine 107–arginine 110. Aspartate 109 serves as the catalytic Proton acceptor. Residue aspartate 129 coordinates K(+). Threonine 132 is a binding site for ATP. Position 184 (threonine 184) interacts with substrate.

It belongs to the type III pantothenate kinase family. Homodimer. NH4(+) serves as cofactor. It depends on K(+) as a cofactor.

The protein localises to the cytoplasm. It catalyses the reaction (R)-pantothenate + ATP = (R)-4'-phosphopantothenate + ADP + H(+). It participates in cofactor biosynthesis; coenzyme A biosynthesis; CoA from (R)-pantothenate: step 1/5. In terms of biological role, catalyzes the phosphorylation of pantothenate (Pan), the first step in CoA biosynthesis. In Clostridium botulinum (strain Loch Maree / Type A3), this protein is Type III pantothenate kinase.